The chain runs to 623 residues: Procollagen galactosyltransferase 1 (623 aa).

An N-terminal signal peptide occupies residues 1–30 (MAAAPRACKGHGRPLPVLLLLLLLALPPLG). Residues asparagine 97, asparagine 185, and asparagine 382 are each glycosylated (N-linked (GlcNAc...) asparagine). Positions 589 to 607 (RAKSQKMREQQALSREAKN) are enriched in basic and acidic residues. A disordered region spans residues 589–623 (RAKSQKMREQQALSREAKNSDVLQSPLDSAARDEL). The short motif at 620-623 (RDEL) is the Prevents secretion from ER element.

This sequence belongs to the glycosyltransferase 25 family. In terms of processing, N-glycosylated.

It localises to the endoplasmic reticulum lumen. The catalysed reaction is (5R)-5-hydroxy-L-lysyl-[collagen] + UDP-alpha-D-galactose = (5R)-5-O-(beta-D-galactosyl)-5-hydroxy-L-lysyl-[collagen] + UDP + H(+). Beta-galactosyltransferase that transfers beta-galactose to hydroxylysine residues of type I collagen. By acting on collagen glycosylation, facilitates the formation of collagen triple helix. Also involved in the biosynthesis of collagen type IV. The sequence is that of Procollagen galactosyltransferase 1 (COLGALT1) from Bos taurus (Bovine).